A 397-amino-acid polypeptide reads, in one-letter code: Serine/threonine-protein kinase 17A (397 aa).

The tract at residues 1-23 (MIPLEKPGSGGSPSAAASGSGPG) is disordered. Ser-9 carries the phosphoserine modification. In terms of domain architecture, Protein kinase spans 44-304 (LSPGRELGRG…AEECLKHPWL (261 aa)). Residues 50–58 (LGRGKFAVV) and Lys-73 contribute to the ATP site. The active-site Proton acceptor is the Asp-169.

Belongs to the protein kinase superfamily. CAMK Ser/Thr protein kinase family. DAP kinase subfamily. In terms of processing, autophosphorylated. Highly expressed in bone marrow. Lower levels in brain, heart, lung, liver and kidney.

The protein resides in the nucleus. It catalyses the reaction L-seryl-[protein] + ATP = O-phospho-L-seryl-[protein] + ADP + H(+). The enzyme catalyses L-threonyl-[protein] + ATP = O-phospho-L-threonyl-[protein] + ADP + H(+). Its activity is regulated as follows. Inhibited by thiazolidinedione-type compounds: inhibited by furan- and pyridone- thiazolidinediones. In terms of biological role, acts as a positive regulator of apoptosis. May also act as a regulator of cellular reactive oxygen species. In Oryctolagus cuniculus (Rabbit), this protein is Serine/threonine-protein kinase 17A (STK17A).